Reading from the N-terminus, the 460-residue chain is Muscarinic acetylcholine receptor M1 (460 aa).

Topologically, residues 1-22 are extracellular; the sequence is MNTSAPPAVSPNITVLAPGKGP. N-linked (GlcNAc...) asparagine glycans are attached at residues N2 and N12. The helical transmembrane segment at 23 to 48 threads the bilayer; that stretch reads WQVAFIGITTGLLSLATVTGNLLVLI. At 49–62 the chain is on the cytoplasmic side; sequence SFKVNTELKTVNNY. The helical transmembrane segment at 63-84 threads the bilayer; the sequence is FLLSLACADLIIGTFSMNLYTT. Residues 85–95 lie on the Extracellular side of the membrane; sequence YLLMGHWALGT. A helical transmembrane segment spans residues 96 to 121; sequence LACDLWLALDYVASNASVMNLLLISF. An intrachain disulfide couples C98 to C178. Residues 122 to 142 lie on the Cytoplasmic side of the membrane; that stretch reads DRYFSVTRPLSYRAKRTPRRA. A helical transmembrane segment spans residues 143-164; the sequence is ALMIGLAWLVSFVLWAPAILFW. Residues 165–185 lie on the Extracellular side of the membrane; the sequence is QYLVGERTVLAGQCYIQFLSQ. A helical membrane pass occupies residues 186 to 209; that stretch reads PIITFGTAMAAFYLPVTVMCTLYW. The Cytoplasmic portion of the chain corresponds to 210 to 366; sequence RIYRETENRA…LVKEKKAART (157 aa). Disordered stretches follow at residues 225–256, 274–296, and 310–351; these read LQGSETPGKGGGSSSSSERSQPGAEGSPETPP, WKEEEEEDEGSMESLTSSEGEEP, and EAQA…QLAK. A Phosphothreonine modification is found at T230. Positions 238–247 are enriched in low complexity; the sequence is SSSSERSQPG. The segment covering 328–343 has biased composition (basic residues); that stretch reads RPTRKGRERAGKGQKP. A helical transmembrane segment spans residues 367 to 390; it reads LSAILLAFIVTWTPYNIMVLVSTF. Topologically, residues 391–397 are extracellular; that stretch reads CKDCVPE. The helical transmembrane segment at 398–420 threads the bilayer; it reads TLWELGYWLCYVNSTINPMCYAL. Topologically, residues 421–460 are cytoplasmic; sequence CNKAFRDTFRLLLLCRWDKRRWRKIPKRPGSVHRTPSRQC. Residue T428 is modified to Phosphothreonine. Phosphoserine is present on S451. T455 is modified (phosphothreonine). S457 is subject to Phosphoserine.

The protein belongs to the G-protein coupled receptor 1 family. Muscarinic acetylcholine receptor subfamily. CHRM1 sub-subfamily. As to quaternary structure, interacts with GPRASP2. Interacts with TMEM147.

The protein resides in the cell membrane. It localises to the postsynaptic cell membrane. Functionally, the muscarinic acetylcholine receptor mediates various cellular responses, including inhibition of adenylate cyclase, breakdown of phosphoinositides and modulation of potassium channels through the action of G proteins. Primary transducing effect is Pi turnover. This chain is Muscarinic acetylcholine receptor M1 (CHRM1), found in Sus scrofa (Pig).